The primary structure comprises 312 residues: D-alanine--D-alanine ligase (312 aa).

Residues K108 to S308 enclose the ATP-grasp domain. ATP is bound at residue A138–Y193. Residues D262, E275, and N277 each contribute to the Mg(2+) site.

The protein belongs to the D-alanine--D-alanine ligase family. It depends on Mg(2+) as a cofactor. Requires Mn(2+) as cofactor.

It is found in the cytoplasm. The catalysed reaction is 2 D-alanine + ATP = D-alanyl-D-alanine + ADP + phosphate + H(+). Its pathway is cell wall biogenesis; peptidoglycan biosynthesis. Its function is as follows. Cell wall formation. The polypeptide is D-alanine--D-alanine ligase (Burkholderia pseudomallei (strain 668)).